The primary structure comprises 299 residues: Regucalcin (299 aa).

A divalent metal cation is bound at residue glutamate 18. The substrate site is built by arginine 101, asparagine 103, and glutamate 121. Lysine 144 is modified (N6-succinyllysine). A divalent metal cation-binding residues include asparagine 154 and aspartate 204. Aspartate 204 functions as the Proton donor/acceptor in the catalytic mechanism. N6-succinyllysine occurs at positions 244 and 253.

It belongs to the SMP-30/CGR1 family. As to quaternary structure, monomer. Requires Zn(2+) as cofactor. The cofactor is Mn(2+). Ca(2+) is required as a cofactor. Mg(2+) serves as cofactor.

It is found in the cytoplasm. It catalyses the reaction D-glucono-1,5-lactone + H2O = D-gluconate + H(+). In terms of biological role, gluconolactonase with low activity towards other sugar lactones, including gulonolactone and galactonolactone. Can also hydrolyze diisopropyl phosphorofluoridate and phenylacetate (in vitro). Calcium-binding protein. Modulates Ca(2+) signaling, and Ca(2+)-dependent cellular processes and enzyme activities. This is Regucalcin (RGN) from Macaca fascicularis (Crab-eating macaque).